The sequence spans 177 residues: Large ribosomal subunit protein uL6 (177 aa).

It belongs to the universal ribosomal protein uL6 family. Part of the 50S ribosomal subunit.

In terms of biological role, this protein binds to the 23S rRNA, and is important in its secondary structure. It is located near the subunit interface in the base of the L7/L12 stalk, and near the tRNA binding site of the peptidyltransferase center. This chain is Large ribosomal subunit protein uL6, found in Zymomonas mobilis subsp. mobilis (strain ATCC 31821 / ZM4 / CP4).